The chain runs to 340 residues: MKVKVAINGFGRIGRMVFRKAMLDDQIQVVAINASYSAETLAHLIKYDTIHGRYDKEVVAGEDSLIVNGKKVLLLNSRDPKQLPWREYDIDIVVEATGKFNAKDKAMGHIEAGAKKVILTAPGKNEDVTIVMGVNEDQFDAERHVIISNASCTTNCLAPVVKVLDEEFGIESGLMTTVHAYTNDQKNIDNPHKDLRRARACGESIIPTTTGAAKALSLVLPHLKGKLHGLALRVPVPNVSLVDLVVDLKTDVTAEEVNEAFKRAAKTSMYGVLDYSDEPLVSTDYNTNPHSAVIDGLTTMVMEDRKVKVLAWYDNEWGYSCRVVDLIRHVAARMKHPSAV.

NADP(+)-binding positions include 12–13 (RI), R78, and T120. D-glyceraldehyde 3-phosphate contacts are provided by residues 151–153 (SCT) and T182. The Nucleophile role is filled by C152. Residue N183 coordinates NADP(+). D-glyceraldehyde 3-phosphate-binding positions include R197, 210–211 (TG), and R233. Residue N315 participates in NADP(+) binding.

This sequence belongs to the glyceraldehyde-3-phosphate dehydrogenase family. In terms of assembly, homotetramer. Interacts with BrxC. Post-translationally, in response to oxidative stress, the active site Cys likely reacts with bacillithiol (BSH) to form mixed disulfides to protect the Cys residue against overoxidation. S-bacillithiolation presumably leads to loss of catalytic activity. Debacillithiolation by monothiol bacilliredoxin BrxC restores the activity.

The protein resides in the cytoplasm. It catalyses the reaction D-glyceraldehyde 3-phosphate + phosphate + NADP(+) = (2R)-3-phospho-glyceroyl phosphate + NADPH + H(+). The enzyme catalyses D-glyceraldehyde 3-phosphate + phosphate + NAD(+) = (2R)-3-phospho-glyceroyl phosphate + NADH + H(+). It functions in the pathway carbohydrate biosynthesis; gluconeogenesis. Functionally, involved in the gluconeogenesis. Catalyzes the oxidative phosphorylation of glyceraldehyde 3-phosphate (G3P) to 1,3-bisphosphoglycerate (BPG) using the cofactor NADP. The first reaction step involves the formation of a hemiacetal intermediate between G3P and a cysteine residue, and this hemiacetal intermediate is then oxidized to a thioester, with concomitant reduction of NADP to NADPH. The reduced NADPH is then exchanged with the second NADP, and the thioester is attacked by a nucleophilic inorganic phosphate to produce BPG. The sequence is that of Glyceraldehyde-3-phosphate dehydrogenase 2 from Bacillus subtilis (strain 168).